The following is a 598-amino-acid chain: Aspartate--tRNA(Asp/Asn) ligase (598 aa).

Position 172 (Glu-172) interacts with L-aspartate. The aspartate stretch occupies residues 196-199; it reads QLFK. Residue Arg-218 coordinates L-aspartate. ATP contacts are provided by residues 218–220 and Gln-227; that span reads RDE. Position 455 (His-455) interacts with L-aspartate. Glu-489 contacts ATP. Arg-496 is an L-aspartate binding site. Residue 541–544 participates in ATP binding; the sequence is GLDR.

Belongs to the class-II aminoacyl-tRNA synthetase family. Type 1 subfamily. Homodimer.

It is found in the cytoplasm. The enzyme catalyses tRNA(Asx) + L-aspartate + ATP = L-aspartyl-tRNA(Asx) + AMP + diphosphate. Aspartyl-tRNA synthetase with relaxed tRNA specificity since it is able to aspartylate not only its cognate tRNA(Asp) but also tRNA(Asn). Reaction proceeds in two steps: L-aspartate is first activated by ATP to form Asp-AMP and then transferred to the acceptor end of tRNA(Asp/Asn). The protein is Aspartate--tRNA(Asp/Asn) ligase of Burkholderia mallei (strain ATCC 23344).